Consider the following 475-residue polypeptide: Gamma-aminobutyric acid receptor subunit gamma-2 (475 aa).

A signal peptide spans 1 to 39 (MSSPNIWSTGSSVYSTPVFSQKMTVWILLLLSLYPGFTS). Topologically, residues 40–275 (QKSDDDYEDY…FDLSRRMGYF (236 aa)) are extracellular. 2 N-linked (GlcNAc...) asparagine glycosylation sites follow: Asn52 and Asn129. Cysteines 190 and 204 form a disulfide. N-linked (GlcNAc...) asparagine glycosylation is present at Asn247. A helical transmembrane segment spans residues 276-296 (TIQTYIPCTLIVVLSWVSFWI). Residues 297-302 (NKDAVP) are Cytoplasmic-facing. A helical transmembrane segment spans residues 303–322 (ARTSLGITTVLTMTTLSTIA). The Extracellular portion of the chain corresponds to 323–334 (RKSLPKVSYVTA). A helical membrane pass occupies residues 335-359 (MDLFVSVCFIFVFSALVEYGTLHYF). Topologically, residues 360–451 (VSNRKPSKDK…IHIRIAKMDS (92 aa)) are cytoplasmic. Residues 433 to 450 (RTGAWRHGRIHIRIAKMD) form an interaction with GABARAP region. The helical transmembrane segment at 452-472 (YARIFFPTAFCLFNLVYWVSY) threads the bilayer. Residues 473-475 (LYL) are Extracellular-facing.

Belongs to the ligand-gated ion channel (TC 1.A.9) family. Gamma-aminobutyric acid receptor (TC 1.A.9.5) subfamily. GABRG2 sub-subfamily. Heteropentamer, formed by a combination of alpha (GABRA1-6), beta (GABRB1-3), gamma (GABRG1-3), delta (GABRD), epsilon (GABRE), rho (GABRR1-3), pi (GABRP) and theta (GABRQ) chains, each subunit exhibiting distinct physiological and pharmacological properties. Interacts with GABARAP. Interacts with KIF21B. Identified in a complex of 720 kDa composed of LHFPL4, NLGN2, GABRA1, GABRB2, GABRG2 and GABRB3. Interacts with LHFPL4. Interacts with SHISA7; interaction leads to the regulation of GABA(A) receptor trafficking, channel deactivation kinetics and pharmacology. In terms of processing, palmitoylated by ZDHHC3/GODZ; required for the accumulation of GABA(A) receptors at the postsynaptic membrane of inhibitory GABAergic synapses.

It is found in the postsynaptic cell membrane. It localises to the cell membrane. The protein resides in the cell projection. Its subcellular location is the dendrite. The protein localises to the cytoplasmic vesicle membrane. It catalyses the reaction chloride(in) = chloride(out). With respect to regulation, allosterically activated by benzodiazepines. Activated by pentobarbital. Potentiated by etomidate, propofol, pregnanolone. Inhibited by the antagonist bicuculline. Inhibited by zinc ions. Potentiated by histamine. In terms of biological role, gamma subunit of the heteropentameric ligand-gated chloride channel gated by gamma-aminobutyric acid (GABA), a major inhibitory neurotransmitter in the brain. GABA-gated chloride channels, also named GABA(A) receptors (GABAAR), consist of five subunits arranged around a central pore and contain GABA active binding site(s) located at the alpha and beta subunit interface(s). When activated by GABA, GABAARs selectively allow the flow of chloride anions across the cell membrane down their electrochemical gradient. Gamma-2/GABRG2-containing GABAARs are found at both synaptic and extrasynaptic sites. Chloride influx into the postsynaptic neuron following GABAAR opening decreases the neuron ability to generate a new action potential, thereby reducing nerve transmission. GABAARs containing alpha-1 and beta-2 or -3 subunits exhibit synaptogenic activity; the gamma-2 subunit being necessary but not sufficient to induce rapid synaptic contacts formation. Extrasynaptic gamma-2-containing receptors contribute to the tonic GABAergic inhibition. GABAARs function also as histamine receptor where histamine binds at the interface of two neighboring beta subunits and potentiates GABA response in a gamma-2 subunit-controlled manner. The polypeptide is Gamma-aminobutyric acid receptor subunit gamma-2 (Homo sapiens (Human)).